The following is a 184-amino-acid chain: NEDD8-conjugating enzyme Ubc12 (184 aa).

Residues 30 to 175 (AGELRLHKDI…VRRAMTGGYV (146 aa)) form the UBC core domain. Catalysis depends on Cys113, which acts as the Glycyl thioester intermediate.

Belongs to the ubiquitin-conjugating enzyme family. UBC12 subfamily. In terms of assembly, interacts with RBX1. In terms of tissue distribution, expressed in shoot, root and floral meristems, and in vascular tissues of leaves.

Its pathway is protein modification; protein neddylation. Functionally, accepts the ubiquitin-like protein NEDD8/RUB1 from the ECR1-AXR1 E1 complex and catalyzes its covalent attachment to other proteins. In Arabidopsis thaliana (Mouse-ear cress), this protein is NEDD8-conjugating enzyme Ubc12 (RCE1).